Consider the following 576-residue polypeptide: RING finger and SPRY domain-containing protein 1 (576 aa).

A signal peptide spans 1 to 16; sequence MIVFGWAVFLASRSLG. A Phosphoserine modification is found at S50. The disordered stretch occupies residues 50-99; that stretch reads SGTDDSVDTQQQQAENSAVPTADTRSQPRDPVRPPRRGRGPHEPRRKKQN. Residues 57–68 are compositionally biased toward polar residues; it reads DTQQQQAENSAV. Over residues 83 to 97 the composition is skewed to basic residues; sequence PPRRGRGPHEPRRKK. The 184-residue stretch at 300–483 folds into the B30.2/SPRY domain; sequence LFLKEGRQLT…CEFNFGAKPF (184 aa). N-linked (GlcNAc...) asparagine glycosylation occurs at N314. The RING-type zinc finger occupies 527 to 562; sequence CSLCCDEVADTQLKPCGHSDLCMDCALQLETCPLCR.

It localises to the secreted. This chain is RING finger and SPRY domain-containing protein 1 (RSPRY1), found in Pongo abelii (Sumatran orangutan).